Reading from the N-terminus, the 372-residue chain is tRNA-specific 2-thiouridylase MnmA (372 aa).

Residues 16–23 (GMSGGVDS) and Met42 contribute to the ATP site. The interaction with target base in tRNA stretch occupies residues 102 to 104 (NPD). The Nucleophile role is filled by Cys107. A disulfide bridge connects residues Cys107 and Cys205. Gly132 is an ATP binding site. The interaction with tRNA stretch occupies residues 155–157 (KDQ). The active-site Cysteine persulfide intermediate is Cys205. The interval 317 to 318 (RY) is interaction with tRNA.

Belongs to the MnmA/TRMU family.

The protein resides in the cytoplasm. The catalysed reaction is S-sulfanyl-L-cysteinyl-[protein] + uridine(34) in tRNA + AH2 + ATP = 2-thiouridine(34) in tRNA + L-cysteinyl-[protein] + A + AMP + diphosphate + H(+). In terms of biological role, catalyzes the 2-thiolation of uridine at the wobble position (U34) of tRNA, leading to the formation of s(2)U34. The chain is tRNA-specific 2-thiouridylase MnmA from Shewanella baltica (strain OS185).